Here is a 213-residue protein sequence, read N- to C-terminus: Kynurenine formamidase (213 aa).

Position 18 (Trp-18) interacts with substrate. His-48, His-52, and Asp-54 together coordinate Zn(2+). His-58 (proton donor/acceptor) is an active-site residue. Zn(2+)-binding residues include His-160 and Glu-172.

It belongs to the Cyclase 1 superfamily. KynB family. Homodimer. Zn(2+) serves as cofactor.

It carries out the reaction N-formyl-L-kynurenine + H2O = L-kynurenine + formate + H(+). It participates in amino-acid degradation; L-tryptophan degradation via kynurenine pathway; L-kynurenine from L-tryptophan: step 2/2. Catalyzes the hydrolysis of N-formyl-L-kynurenine to L-kynurenine, the second step in the kynurenine pathway of tryptophan degradation. The protein is Kynurenine formamidase of Burkholderia cenocepacia (strain ATCC BAA-245 / DSM 16553 / LMG 16656 / NCTC 13227 / J2315 / CF5610) (Burkholderia cepacia (strain J2315)).